The chain runs to 190 residues: Small ribosomal subunit protein uS4 (190 aa).

The 73-residue stretch at 106–178 (RRLQTVVFKH…GRVKRVKRNA (73 aa)) folds into the S4 RNA-binding domain. The disordered stretch occupies residues 166–190 (GRPGRVKRVKRNAAKKGSGGGDDDE). The segment covering 169–179 (GRVKRVKRNAA) has biased composition (basic residues).

It belongs to the universal ribosomal protein uS4 family.

The chain is Small ribosomal subunit protein uS4 from Trypanosoma brucei brucei.